The following is a 101-amino-acid chain: Small ribosomal subunit protein uS14 (101 aa).

The protein belongs to the universal ribosomal protein uS14 family. As to quaternary structure, part of the 30S ribosomal subunit. Contacts proteins S3 and S10.

Functionally, binds 16S rRNA, required for the assembly of 30S particles and may also be responsible for determining the conformation of the 16S rRNA at the A site. The sequence is that of Small ribosomal subunit protein uS14 from Burkholderia ambifaria (strain MC40-6).